The sequence spans 158 residues: Transcription elongation factor GreA (158 aa).

This sequence belongs to the GreA/GreB family.

Necessary for efficient RNA polymerase transcription elongation past template-encoded arresting sites. The arresting sites in DNA have the property of trapping a certain fraction of elongating RNA polymerases that pass through, resulting in locked ternary complexes. Cleavage of the nascent transcript by cleavage factors such as GreA or GreB allows the resumption of elongation from the new 3'terminus. GreA releases sequences of 2 to 3 nucleotides. In Rhizobium etli (strain CIAT 652), this protein is Transcription elongation factor GreA.